The sequence spans 65 residues: Large ribosomal subunit protein bL35 (65 aa).

Residues 1-28 are disordered; the sequence is MPKLKTRKAAARRFKATGSGKIKRRKAF.

Belongs to the bacterial ribosomal protein bL35 family.

This is Large ribosomal subunit protein bL35 from Trichodesmium erythraeum (strain IMS101).